A 400-amino-acid polypeptide reads, in one-letter code: MDSSAAPTNASNCTDALAYSSCSPAPSPGSWVNLSHLDGNLSDPCGPNRTDLGGRDSLCPPTGSPSMITAITIMALYSIVCVVGLFGNFLVMYVIVRYTKMKTATNIYIFNLALADALATSTLPFQSVNYLMGTWPFGTILCKIVISIDYYNMFTSIFTLCTMSVDRYIAVCHPVKALDFRTPRNAKIINVCNWILSSAIGLPVMFMATTKYRQGSIDCTLTFSHPTWYWENLLKICVFIFAFIMPVLIITVCYGLMILRLKSVRMLSGSKEKDRNLRRITRMVLVVVAVFIVCWTPIHIYVIIKALVTIPETTFQTVSWHFCIALGYTNSCLNPVLYAFLDENFKRCFREFCIPTSSNIEQQNSTRIRQNTRDHPSTANTVDRTNHQLENLEAETAPLP.

Over 1 to 68 (MDSSAAPTNA…CPPTGSPSMI (68 aa)) the chain is Extracellular. N-linked (GlcNAc...) asparagine glycosylation is found at Asn9, Asn12, Asn33, Asn40, and Asn48. The helical transmembrane segment at 69–93 (TAITIMALYSIVCVVGLFGNFLVMY) threads the bilayer. The Cytoplasmic portion of the chain corresponds to 94-106 (VIVRYTKMKTATN). A helical transmembrane segment spans residues 107-131 (IYIFNLALADALATSTLPFQSVNYL). Topologically, residues 132–142 (MGTWPFGTILC) are extracellular. Cys142 and Cys219 are oxidised to a cystine. The chain crosses the membrane as a helical span at residues 143-165 (KIVISIDYYNMFTSIFTLCTMSV). Topologically, residues 166-185 (DRYIAVCHPVKALDFRTPRN) are cytoplasmic. Residue Tyr168 is modified to Phosphotyrosine. A helical membrane pass occupies residues 186–207 (AKIINVCNWILSSAIGLPVMFM). Over 208-230 (ATTKYRQGSIDCTLTFSHPTWYW) the chain is Extracellular. A helical transmembrane segment spans residues 231-255 (ENLLKICVFIFAFIMPVLIITVCYG). Residues 256-279 (LMILRLKSVRMLSGSKEKDRNLRR) lie on the Cytoplasmic side of the membrane. A helical membrane pass occupies residues 280–306 (ITRMVLVVVAVFIVCWTPIHIYVIIKA). The Extracellular segment spans residues 307 to 314 (LVTIPETT). Residues 315–338 (FQTVSWHFCIALGYTNSCLNPVLY) form a helical membrane-spanning segment. An NPxxY; plays a role in stabilizing the activated conformation of the receptor motif is present at residues 334–338 (NPVLY). Over 339–400 (AFLDENFKRC…NLEAETAPLP (62 aa)) the chain is Cytoplasmic. Cys353 carries the S-palmitoyl cysteine lipid modification. Ser365 bears the Phosphoserine mark. Phosphothreonine is present on Thr372. Residue Ser377 is modified to Phosphoserine. Thr396 bears the Phosphothreonine mark.

The protein belongs to the G-protein coupled receptor 1 family. Forms homooligomers and heterooligomers with other GPCRs, such as OPRD1, OPRK1, OPRL1, NPFFR2, ADRA2A, SSTR2, CNR1 and CCR5 (probably in dimeric forms). Interacts with heterotrimeric G proteins; interaction with a heterotrimeric complex containing GNAI1, GNB1 and GNG2 stabilizes the active conformation of the receptor and increases its affinity for endomorphin-2, the synthetic opioid peptide DAMGO and for morphinan agonists. Interacts with PPL; the interaction disrupts agonist-mediated G-protein activation. Interacts (via C-terminus) with DNAJB4 (via C-terminus). Interacts with calmodulin; the interaction inhibits the constitutive activity of OPRM1; it abolishes basal and attenuates agonist-stimulated G-protein coupling. Interacts with FLNA, PLD2, RANBP9 and WLS and GPM6A. Interacts with RTP4. Interacts with SYP and GNAS. Interacts with RGS9, RGS17, RGS20, RGS4, PPP1R9B and HINT1. Post-translationally, phosphorylated. Differentially phosphorylated in basal and agonist-induced conditions. Agonist-mediated phosphorylation modulates receptor internalization. Phosphorylated by GRK2 in a agonist-dependent manner. Phosphorylation at Tyr-168 requires receptor activation, is dependent on non-receptor protein tyrosine kinase Src and results in a decrease in agonist efficacy by reducing G-protein coupling efficiency. Phosphorylated on tyrosine residues; the phosphorylation is involved in agonist-induced G-protein-independent receptor down-regulation. Phosphorylation at Ser-377 is involved in G-protein-dependent but not beta-arrestin-dependent activation of the ERK pathway. Ubiquitinated. A basal ubiquitination seems not to be related to degradation. Ubiquitination is increased upon formation of OPRM1:OPRD1 oligomers leading to proteasomal degradation; the ubiquitination is diminished by RTP4. As to expression, expressed in brain. Isoform 16 and isoform 17 are detected in brain.

The protein resides in the cell membrane. Its subcellular location is the cell projection. It is found in the axon. The protein localises to the perikaryon. It localises to the dendrite. The protein resides in the endosome. Its subcellular location is the cytoplasm. Its function is as follows. Receptor for endogenous opioids such as beta-endorphin and endomorphin. Receptor for natural and synthetic opioids including morphine, heroin, DAMGO, fentanyl, etorphine, buprenorphin and methadone. Also activated by enkephalin peptides, such as Met-enkephalin or Met-enkephalin-Arg-Phe, with higher affinity for Met-enkephalin-Arg-Phe. Agonist binding to the receptor induces coupling to an inactive GDP-bound heterotrimeric G-protein complex and subsequent exchange of GDP for GTP in the G-protein alpha subunit leading to dissociation of the G-protein complex with the free GTP-bound G-protein alpha and the G-protein beta-gamma dimer activating downstream cellular effectors. The agonist- and cell type-specific activity is predominantly coupled to pertussis toxin-sensitive G(i) and G(o) G alpha proteins, GNAI1, GNAI2, GNAI3 and GNAO1 isoforms Alpha-1 and Alpha-2, and to a lesser extent to pertussis toxin-insensitive G alpha proteins GNAZ and GNA15. They mediate an array of downstream cellular responses, including inhibition of adenylate cyclase activity and both N-type and L-type calcium channels, activation of inward rectifying potassium channels, mitogen-activated protein kinase (MAPK), phospholipase C (PLC), phosphoinositide/protein kinase (PKC), phosphoinositide 3-kinase (PI3K) and regulation of NF-kappa-B. Also couples to adenylate cyclase stimulatory G alpha proteins. The selective temporal coupling to G-proteins and subsequent signaling can be regulated by RGSZ proteins, such as RGS9, RGS17 and RGS4. Phosphorylation by members of the GPRK subfamily of Ser/Thr protein kinases and association with beta-arrestins is involved in short-term receptor desensitization. Beta-arrestins associate with the GPRK-phosphorylated receptor and uncouple it from the G-protein thus terminating signal transduction. The phosphorylated receptor is internalized through endocytosis via clathrin-coated pits which involves beta-arrestins. The activation of the ERK pathway occurs either in a G-protein-dependent or a beta-arrestin-dependent manner and is regulated by agonist-specific receptor phosphorylation. Acts as a class A G-protein coupled receptor (GPCR) which dissociates from beta-arrestin at or near the plasma membrane and undergoes rapid recycling. Receptor down-regulation pathways are varying with the agonist and occur dependent or independent of G-protein coupling. Endogenous ligands induce rapid desensitization, endocytosis and recycling. Heterooligomerization with other GPCRs can modulate agonist binding, signaling and trafficking properties. In terms of biological role, couples to GNAS and is proposed to be involved in excitatory effects. Does not bind agonists but may act through oligomerization with binding-competent OPRM1 isoforms and reduce their ligand binding activity. The sequence is that of Mu-type opioid receptor (OPRM1) from Homo sapiens (Human).